The following is a 372-amino-acid chain: Actin-related protein T3 (372 aa).

The protein belongs to the actin family. Interacts with PFN3. Ubiquitously expressed.

Its subcellular location is the cytoplasm. The protein localises to the cytoskeleton. The protein resides in the nucleus. This Homo sapiens (Human) protein is Actin-related protein T3 (ACTRT3).